The sequence spans 220 residues: Adenylate kinase (220 aa).

13-18 serves as a coordination point for ATP; sequence GAGKGT. The interval 33–62 is NMP; it reads STGDILRAAVKEGTPLGLEAQSYMNRGALV. AMP is bound by residues T34, R39, 60–62, 88–91, and Q95; these read ALV and GFPR. Residues 129-170 form an LID region; the sequence is GRRTCPLCKRIFHVRFNPPPAAPPFCTDHTDCPSELVQRPDD. Residue R130 participates in ATP binding. Zn(2+) is bound by residues C133 and C136. 139 to 140 contacts ATP; the sequence is IF. Residues D156 and C160 each contribute to the Zn(2+) site. The AMP site is built by R167 and R178. ATP is bound at residue R206.

The protein belongs to the adenylate kinase family. As to quaternary structure, monomer.

Its subcellular location is the cytoplasm. It carries out the reaction AMP + ATP = 2 ADP. The protein operates within purine metabolism; AMP biosynthesis via salvage pathway; AMP from ADP: step 1/1. Catalyzes the reversible transfer of the terminal phosphate group between ATP and AMP. Plays an important role in cellular energy homeostasis and in adenine nucleotide metabolism. The polypeptide is Adenylate kinase (Gloeobacter violaceus (strain ATCC 29082 / PCC 7421)).